We begin with the raw amino-acid sequence, 652 residues long: Sodium-dependent nutrient amino acid transporter 1 (652 aa).

The interval 1 to 54 is disordered; the sequence is MELKGVHQQNGTSNGTGAVGAEGESAPPTAPATAEAAASLETTTEKVDAEQQKP. The Cytoplasmic segment spans residues 1 to 58; that stretch reads MELKGVHQQNGTSNGTGAVGAEGESAPPTAPATAEAAASLETTTEKVDAEQQKPERTN. Residues 7 to 16 show a composition bias toward polar residues; the sequence is HQQNGTSNGT. Positions 21–42 are enriched in low complexity; it reads AEGESAPPTAPATAEAAASLET. The span at 43–54 shows a compositional bias: basic and acidic residues; the sequence is TTEKVDAEQQKP. 4 helical membrane passes run 59–79, 92–112, 130–150, and 155–175; these read WGNG…LGNV, GAFL…MYYL, VVPG…CIIT, and LLAL…PWSY. Residues asparagine 201 and asparagine 204 are each glycosylated (N-linked (GlcNAc...) asparagine). Helical transmembrane passes span 240 to 260, 269 to 289, 318 to 338, 352 to 372, 412 to 432, 458 to 478, 485 to 505, 527 to 547, and 564 to 584; these read PDWK…LVIM, AAYF…VRAV, AVVQ…MFAS, IVTT…FAIL, LFSV…IVAL, ICGF…ILTL, TYVV…IYGM, CWSF…MVTI, and AGWL…MWYI.

Belongs to the sodium:neurotransmitter symporter (SNF) (TC 2.A.22) family.

It localises to the membrane. In terms of biological role, unusual broad substrate spectrum amino acid:sodium cotransporter that promotes absorption of the D isomers of essential amino acids. Neutral amino acids are the preferred substrates, especially methionine and phenylalanine. This chain is Sodium-dependent nutrient amino acid transporter 1, found in Drosophila persimilis (Fruit fly).